Reading from the N-terminus, the 55-residue chain is uncharacterized protein (55 aa).

Positions 17–44 (QNVNIALTKKRLDTAQQNADQTLKMIQH) form a coiled coil.

This is an uncharacterized protein from Bacillus subtilis (strain 168).